The sequence spans 45 residues: Protein PsbN (45 aa).

The helical transmembrane segment at 12-30 threads the bilayer; that stretch reads FLSRSLVSFTGYALYTAFG.

It belongs to the PsbN family.

It is found in the plastid. Its subcellular location is the chloroplast thylakoid membrane. Its function is as follows. May play a role in photosystem I and II biogenesis. The polypeptide is Protein PsbN (Adiantum capillus-veneris (Maidenhair fern)).